We begin with the raw amino-acid sequence, 94 residues long: Co-chaperonin GroES (94 aa).

The protein belongs to the GroES chaperonin family. As to quaternary structure, heptamer of 7 subunits arranged in a ring. Interacts with the chaperonin GroEL.

The protein resides in the cytoplasm. Together with the chaperonin GroEL, plays an essential role in assisting protein folding. The GroEL-GroES system forms a nano-cage that allows encapsulation of the non-native substrate proteins and provides a physical environment optimized to promote and accelerate protein folding. GroES binds to the apical surface of the GroEL ring, thereby capping the opening of the GroEL channel. This chain is Co-chaperonin GroES, found in Finegoldia magna (strain ATCC 29328 / DSM 20472 / WAL 2508) (Peptostreptococcus magnus).